A 256-amino-acid polypeptide reads, in one-letter code: Pimeloyl-[acyl-carrier protein] methyl ester esterase (256 aa).

An AB hydrolase-1 domain is found at 15 to 242 (HLVLLHGWGL…AAHAPFISHP (228 aa)). Substrate is bound by residues W22, 82–83 (SL), and 143–147 (FLALQ). Catalysis depends on S82, which acts as the Nucleophile. Catalysis depends on residues D207 and H235. Residue H235 participates in substrate binding.

This sequence belongs to the AB hydrolase superfamily. Carboxylesterase BioH family. As to quaternary structure, monomer.

The protein resides in the cytoplasm. The enzyme catalyses 6-carboxyhexanoyl-[ACP] methyl ester + H2O = 6-carboxyhexanoyl-[ACP] + methanol + H(+). The protein operates within cofactor biosynthesis; biotin biosynthesis. Its function is as follows. The physiological role of BioH is to remove the methyl group introduced by BioC when the pimeloyl moiety is complete. It allows to synthesize pimeloyl-ACP via the fatty acid synthetic pathway through the hydrolysis of the ester bonds of pimeloyl-ACP esters. This chain is Pimeloyl-[acyl-carrier protein] methyl ester esterase, found in Escherichia coli O8 (strain IAI1).